The primary structure comprises 312 residues: Terpene synthase 8 (312 aa).

Residues 96–101 (DDYIYE) carry the DDxx(x)D/E motif motif. Residues 224–232 (NDCGSFKME) carry the NDxxSxxxD/E motif motif.

This sequence belongs to the terpene synthase family.

The enzyme catalyses (2E,6E)-farnesyl diphosphate + H2O = discoidol + diphosphate. The protein operates within sesquiterpene biosynthesis. Terpene synthase; part of the gene cluster that mediates the biosynthesis of the trisnorsesquiterpene discodiene which has a function during later stages of multicellular development, during the transition from fingers to Mexican hats. The terpene synthase tps8 converts its substrate farnesyl diphosphate (FDP) into the bicyclic sesquiterpene alcohol discoidol. The cytochrome P450 monooxygenase cyp521A1 then catalyzes the oxidative degradation of discoidol to form the trisnorsesquiterpene discodiene. The sequence is that of Terpene synthase 8 from Dictyostelium discoideum (Social amoeba).